The chain runs to 325 residues: uncharacterized protein (325 aa).

Positions 1 to 75 (MSQPPEHPGN…PPPGYPTHLQ (75 aa)) are disordered. Composition is skewed to pro residues over residues 24 to 39 (YPPP…PGYG) and 50 to 70 (YNAP…PPGY). 4 helical membrane passes run 96 to 116 (AVTL…VIGA), 153 to 173 (IVMF…HAGI), 205 to 225 (LLIV…GLIF), and 273 to 293 (LVGE…AALI).

The protein resides in the cell membrane. This is an uncharacterized protein from Mycobacterium tuberculosis (strain CDC 1551 / Oshkosh).